Reading from the N-terminus, the 382-residue chain is Heme A synthase (382 aa).

The next 8 membrane-spanning stretches (helical) occupy residues 25 to 45, 112 to 132, 141 to 161, 176 to 196, 211 to 231, 270 to 290, 303 to 323, and 327 to 347; these read GAVRAWLYLLAVLVVAMVAVG, LLGRIVGLVFFLPFAWFWARG, GLLGLGLLGGLQGAIGWIMVA, LALHLTTASLILAGLVWLAAG, VVACLLPALVLVQIWLGGLVA, LALVQFNHRLFAYLVVAVAIA, AAAGRAMGVAALATAQMGLGI, and LLHVPLWAGLAHQVFAMAVLI. Histidine 277 contacts heme. Residue histidine 338 participates in heme binding.

This sequence belongs to the COX15/CtaA family. Type 2 subfamily. As to quaternary structure, interacts with CtaB. Heme b is required as a cofactor.

Its subcellular location is the cell membrane. It catalyses the reaction Fe(II)-heme o + 2 A + H2O = Fe(II)-heme a + 2 AH2. It functions in the pathway porphyrin-containing compound metabolism; heme A biosynthesis; heme A from heme O: step 1/1. Catalyzes the conversion of heme O to heme A by two successive hydroxylations of the methyl group at C8. The first hydroxylation forms heme I, the second hydroxylation results in an unstable dihydroxymethyl group, which spontaneously dehydrates, resulting in the formyl group of heme A. In Methylorubrum extorquens (strain CM4 / NCIMB 13688) (Methylobacterium extorquens), this protein is Heme A synthase.